The chain runs to 754 residues: MTVGAGISVTDSDLVVLGHRVLHGVPENVLVTPASGNALIDGAFIGVTSDQTGSHRVFSLGKLEDLRFMCVFRFKLWWMTQRMGTNGKEIPCETQFLIVEANQGSDLGGRDQSSSYVVFLPILEGDFRAVLQGNEANELEICLESGDPTVDQFEGSHLVFVAAGSDPFDVITKAVKAVEQHLQTFSHRERKKMPDMLNWFGWCTWDAFYTNVTAKDVKQGLESLKAGGVTPKFVIIDDGWQSVGMDETSVEFNADNAANFANRLTHIKENHKFQKDGKEGHRVDDPSLSLGHVITDIKSNNSLKYVYVWHAITGYWGGVKPGVSGMEHYESKVAYPVSSPGVMSSENCGCLESITKNGLGLVNPEKVFSFYNDLHSYLASVGVDGVKVDVQNILETLGAGHGGRVKLAKKYHQALEASISRNFPDNGIISCMSHNTDGLYSAKKTAVIRASDDFWPRDPASHTIHIASVAYNTLFLGEFMQPDWDMFHSLHPMAEYHAAARAVGGCAIYVSDKPGQHDFNLLRKLVLRDGSILRAKLPGRPTSDCFFSDPVRDNKSLLKIWNLNEFTGVIGVFNCQGAGWCKNEKRYLIHDQEPGTISGCVRTNDVHYLHKVAAFEWTGDSIVYSHLRGELVYLPKDTSLPVTLMPREYEVFTVVPVKEFSDGSKFAPVGLMEMFNSGGAIVSLRYDDEGTKFVVRMKLRGSGLVGVYSSVRRPRSVTVDSDDVEYRYEPESGLVTFTLGVPEKELYLWDVVIQ.

It belongs to the glycosyl hydrolases 36 family.

It carries out the reaction alpha-D-galactosyl-(1-&gt;3)-1D-myo-inositol + sucrose = raffinose + myo-inositol. In terms of biological role, transglycosidase operating by a ping-pong reaction mechanism. Involved in the synthesis of raffinose, a major soluble carbohydrate in seeds, roots and tubers. The polypeptide is Probable galactinol--sucrose galactosyltransferase 1 (RFS1) (Arabidopsis thaliana (Mouse-ear cress)).